Consider the following 93-residue polypeptide: Co-chaperonin GroES (93 aa).

Belongs to the GroES chaperonin family. Heptamer of 7 subunits arranged in a ring. Interacts with the chaperonin GroEL.

Its subcellular location is the cytoplasm. Its function is as follows. Together with the chaperonin GroEL, plays an essential role in assisting protein folding. The GroEL-GroES system forms a nano-cage that allows encapsulation of the non-native substrate proteins and provides a physical environment optimized to promote and accelerate protein folding. GroES binds to the apical surface of the GroEL ring, thereby capping the opening of the GroEL channel. The sequence is that of Co-chaperonin GroES from Lacticaseibacillus paracasei (strain ATCC 334 / BCRC 17002 / CCUG 31169 / CIP 107868 / KCTC 3260 / NRRL B-441) (Lactobacillus paracasei).